The sequence spans 532 residues: UDP-glucuronosyltransferase 1A6 (532 aa).

Residues 1–26 (MACLLRSFQRISAGVFFLALWGMVVG) form the signal peptide. N-linked (GlcNAc...) asparagine glycosylation is found at N294 and N346. A helical membrane pass occupies residues 490–506 (VIGFLLAVVLTVAFITF).

This sequence belongs to the UDP-glycosyltransferase family. Isoform 1 interacts with isoform 3/i2 suggesting that oligomerization is involved in negative regulation of transferase activity by isoform 3. Isoform 1 also interacts with respective i2 isoforms of UGT1A1, UGT1A3, UGT1A4, UGT1A7, UGT1A8, UGT1A9 and UGT1A10. Expressed in skin. Isoforms 1 and 3 are expressed in kidney and liver. Isoform 1 but not isoform 2 is expressed in colon, esophagus and small intestine.

The protein localises to the microsome. The protein resides in the endoplasmic reticulum membrane. It carries out the reaction glucuronate acceptor + UDP-alpha-D-glucuronate = acceptor beta-D-glucuronoside + UDP + H(+). The catalysed reaction is (5Z,8Z,11Z,14Z)-eicosatetraenoate + UDP-alpha-D-glucuronate = O-[(5Z),(8Z),(11Z),(14Z)-eicosatetraenoyl]-beta-D-glucuronate + UDP. It catalyses the reaction 15-hydroxy-(5Z,8Z,11Z,13E)-eicosatetraenoate + UDP-alpha-D-glucuronate = 15-O-(beta-D-glucuronosyl)-(5Z,8Z,11Z,14Z)-eicosatetraenoate + UDP + H(+). The enzyme catalyses (E)-ferulate + UDP-alpha-D-glucuronate = (E)-4-O-(beta-D-glucuronosyl)-ferulate + UDP + H(+). It carries out the reaction (E)-ferulate + UDP-alpha-D-glucuronate = (E)-ferulic acid beta-D-glucuronate ester + UDP. Its function is as follows. UDP-glucuronosyltransferase (UGT) that catalyzes phase II biotransformation reactions in which lipophilic substrates are conjugated with glucuronic acid to facilitate their inactivation and excretion from the body. Essential for the elimination and detoxification of drugs, xenobiotics and endogenous compounds. Involved in the glucuronidation of arachidonic acid (AA) and AA-derived eicosanoids including 15-HETE and 20-HETE. Conjugates small planar phenolic molecules such as 4-nitrophenol, 1-naphthol, and 4-methylumbelliferone. The bulky phenol 4-hydroxybiphenyl, androgens and estrogens are not substrates. 2-hydroxybiphenyl is an excellent substrate. Involved in the glucuronidation of the phytochemical ferulic acid at the phenolic or the carboxylic acid group. Functionally, isoform 3 lacks transferase activity but acts as a negative regulator of isoform 1. This chain is UDP-glucuronosyltransferase 1A6, found in Homo sapiens (Human).